Reading from the N-terminus, the 177-residue chain is tRNA (cytidine(56)-2'-O)-methyltransferase (177 aa).

Residues leucine 84 and 109–113 (GAEKV) contribute to the S-adenosyl-L-methionine site.

The protein belongs to the aTrm56 family. In terms of assembly, homodimer.

The protein localises to the cytoplasm. The enzyme catalyses cytidine(56) in tRNA + S-adenosyl-L-methionine = 2'-O-methylcytidine(56) in tRNA + S-adenosyl-L-homocysteine + H(+). Its function is as follows. Specifically catalyzes the AdoMet-dependent 2'-O-ribose methylation of cytidine at position 56 in tRNAs. The protein is tRNA (cytidine(56)-2'-O)-methyltransferase of Methanosarcina acetivorans (strain ATCC 35395 / DSM 2834 / JCM 12185 / C2A).